We begin with the raw amino-acid sequence, 196 residues long: Imidazoleglycerol-phosphate dehydratase (196 aa).

This sequence belongs to the imidazoleglycerol-phosphate dehydratase family.

The protein resides in the cytoplasm. The enzyme catalyses D-erythro-1-(imidazol-4-yl)glycerol 3-phosphate = 3-(imidazol-4-yl)-2-oxopropyl phosphate + H2O. It functions in the pathway amino-acid biosynthesis; L-histidine biosynthesis; L-histidine from 5-phospho-alpha-D-ribose 1-diphosphate: step 6/9. The chain is Imidazoleglycerol-phosphate dehydratase from Desulforamulus reducens (strain ATCC BAA-1160 / DSM 100696 / MI-1) (Desulfotomaculum reducens).